The chain runs to 339 residues: MVREEVAGSTQTLQWKCVESRVDSKRLYYGRFILSPLRKGQADTVGIALRRALLGEIEGTCITRAKFWSVPHEYSTIAGIEESVQEILLNLKEIVLRSNLYGVRDASICVKGPKYITAQDIILPPSVEIVDTAQPIANLTEPIDFCIDLQIKRDRGYQTELIKNYQDGSYPIDAVSMPVRNVNYSIFSCGNGNEKHEILFLEIWTNGSLTPKEALYEASRNLIDLFLPFLHAEEEGTSFEENKNRFTPPLFTFQKRLTNLKKNKKGIPLNCIFIDQLELTSRTXNCLKRANIHTLLDLLSKTEEDLLRIDSFRMEDRKHIWDTLEKHLPIDLLKNKLSF.

The segment at 1-233 (MVREEVAGST…DLFLPFLHAE (233 aa)) is alpha N-terminal domain (alpha-NTD). Residues 264 to 339 (KKGIPLNCIF…IDLLKNKLSF (76 aa)) form an alpha C-terminal domain (alpha-CTD) region.

The protein belongs to the RNA polymerase alpha chain family. In plastids the minimal PEP RNA polymerase catalytic core is composed of four subunits: alpha, beta, beta', and beta''. When a (nuclear-encoded) sigma factor is associated with the core the holoenzyme is formed, which can initiate transcription.

It is found in the plastid. The protein localises to the chloroplast. The catalysed reaction is RNA(n) + a ribonucleoside 5'-triphosphate = RNA(n+1) + diphosphate. Functionally, DNA-dependent RNA polymerase catalyzes the transcription of DNA into RNA using the four ribonucleoside triphosphates as substrates. The chain is DNA-directed RNA polymerase subunit alpha from Heteranthelium piliferum (Elymus pilifer).